The following is a 186-amino-acid chain: Large ribosomal subunit protein uL5 (186 aa).

This sequence belongs to the universal ribosomal protein uL5 family. Part of the 50S ribosomal subunit; part of the 5S rRNA/L5/L18/L25 subcomplex. Contacts the 5S rRNA and the P site tRNA. Forms a bridge to the 30S subunit in the 70S ribosome.

Its function is as follows. This is one of the proteins that bind and probably mediate the attachment of the 5S RNA into the large ribosomal subunit, where it forms part of the central protuberance. In the 70S ribosome it contacts protein S13 of the 30S subunit (bridge B1b), connecting the 2 subunits; this bridge is implicated in subunit movement. Contacts the P site tRNA; the 5S rRNA and some of its associated proteins might help stabilize positioning of ribosome-bound tRNAs. The protein is Large ribosomal subunit protein uL5 of Karelsulcia muelleri (strain GWSS) (Sulcia muelleri).